The chain runs to 219 residues: Apoptosis regulator OPG045 (219 aa).

Belongs to the orthopoxvirus OPG045 family. Homodimer. Interacts with host pro-apoptotic protein BCL2L11 (via BH3 domain). Interacts with host NLRP1. Interacts with host BAK.

It localises to the host mitochondrion outer membrane. It is found in the host cytoplasm. In terms of biological role, plays a role in evading host innate immune response by inhibiting host inflammasome activation. Interacts with and inhibits NLR-mediated interleukin-1 beta/IL1B production in infected cells. At the host mitochondria outer membrane, interacts with the BH3 domain of host BAK and prevents BAK from binding active BAX. In turn, host apoptosis is inhibited. In Cynomys gunnisoni (Gunnison's prairie dog), this protein is Apoptosis regulator OPG045 (OPG045).